Consider the following 119-residue polypeptide: Large ribosomal subunit protein bL20 (119 aa).

Belongs to the bacterial ribosomal protein bL20 family.

Binds directly to 23S ribosomal RNA and is necessary for the in vitro assembly process of the 50S ribosomal subunit. It is not involved in the protein synthesizing functions of that subunit. This chain is Large ribosomal subunit protein bL20, found in Bradyrhizobium sp. (strain BTAi1 / ATCC BAA-1182).